A 92-amino-acid chain; its full sequence is MTRSRKKNPFVANHLLKKIKKLNTKGEKAIIKTWSRKSTIIPIMIGHTIAIHNGKEHLPVYITDRMVGHKLGEFSPTLNFGGFAKNDNKSRR.

The protein belongs to the universal ribosomal protein uS19 family.

The protein localises to the plastid. Its subcellular location is the chloroplast. Protein S19 forms a complex with S13 that binds strongly to the 16S ribosomal RNA. The protein is Small ribosomal subunit protein uS19c (rps19) of Pisum sativum (Garden pea).